A 165-amino-acid polypeptide reads, in one-letter code: Transcription antitermination protein NusB (165 aa).

Residues 139-165 (EAVRSHRRNKRPAADKPVATDKPAAAE) form a disordered region.

The protein belongs to the NusB family.

In terms of biological role, involved in transcription antitermination. Required for transcription of ribosomal RNA (rRNA) genes. Binds specifically to the boxA antiterminator sequence of the ribosomal RNA (rrn) operons. This is Transcription antitermination protein NusB from Laribacter hongkongensis (strain HLHK9).